Here is a 618-residue protein sequence, read N- to C-terminus: GMC oxidoreductase family protein Mala s 12 (618 aa).

An N-terminal signal peptide occupies residues 1 to 23; sequence MKGIVSWAVVSAALVLSATESLA. FAD is bound by residues V129 and V280. Catalysis depends on H556, which acts as the Proton donor. The active-site Proton acceptor is the H599.

The protein belongs to the GMC oxidoreductase family. Monomer. It depends on FAD as a cofactor.

The protein localises to the secreted. The chain is GMC oxidoreductase family protein Mala s 12 from Malassezia sympodialis (strain ATCC 42132) (Atopic eczema-associated yeast).